The following is a 369-amino-acid chain: Chaperone protein DnaJ (369 aa).

In terms of domain architecture, J spans 3-67 (DHYEVLGVER…QQRQQYDRGG (65 aa)). The segment at 123–205 (GAHRDLEVDT…CQGQGRVRAR (83 aa)) adopts a CR-type zinc-finger fold. 8 residues coordinate Zn(2+): Cys-136, Cys-139, Cys-153, Cys-156, Cys-179, Cys-182, Cys-193, and Cys-196. 4 CXXCXGXG motif repeats span residues 136–143 (CETCDGSC), 153–160 (CDICHGTG), 179–186 (CGSCRGYG), and 193–200 (CVTCQGQG).

This sequence belongs to the DnaJ family. Homodimer. Zn(2+) serves as cofactor.

It localises to the cytoplasm. Participates actively in the response to hyperosmotic and heat shock by preventing the aggregation of stress-denatured proteins and by disaggregating proteins, also in an autonomous, DnaK-independent fashion. Unfolded proteins bind initially to DnaJ; upon interaction with the DnaJ-bound protein, DnaK hydrolyzes its bound ATP, resulting in the formation of a stable complex. GrpE releases ADP from DnaK; ATP binding to DnaK triggers the release of the substrate protein, thus completing the reaction cycle. Several rounds of ATP-dependent interactions between DnaJ, DnaK and GrpE are required for fully efficient folding. Also involved, together with DnaK and GrpE, in the DNA replication of plasmids through activation of initiation proteins. In Leifsonia xyli subsp. xyli (strain CTCB07), this protein is Chaperone protein DnaJ.